Consider the following 277-residue polypeptide: Basic leucine zipper transcriptional factor ATF-like 2 (277 aa).

Disordered regions lie at residues 15–50 (LGES…HQQH), 126–146 (FQTP…CSHE), and 191–256 (SFSK…QKSS). The 64-residue stretch at 18-81 (SQKQLKKKQK…AGWGRTLHLH (64 aa)) folds into the bZIP domain. Positions 20-42 (KQLKKKQKNRVAAQRSRQKHTSK) are basic motif. Positions 41 to 50 (SKADALHQQH) are enriched in basic and acidic residues. The interval 46-67 (LHQQHESLEKQNHALRKEIQAL) is leucine-zipper. 2 stretches are compositionally biased toward polar residues: residues 213–227 (RQEQ…SSDS) and 247–256 (GSSTHWQKSS).

The protein belongs to the bZIP family. Heterodimer; heterodimerizes with JUN family proteins.

It is found in the nucleus. In terms of biological role, AP-1 family transcription factor that controls the differentiation of lineage-specific cells in the immune system. Selectively suppresses CCN1 transcription and hence blocks the downstream cell proliferation signals produced by CCN1 and inhibits CCN1-induced anchorage-independent growth and invasion in several cancer types. Possibly acts by interfering with AP-1 binding to CCN1 promoter. Following infection, participates in the differentiation of CD8(+) thymic conventional dendritic cells in the immune system. Acts via the formation of a heterodimer with JUN family proteins that recognizes and binds DNA sequence 5'-TGA[CG]TCA-3' and regulates expression of target genes. The chain is Basic leucine zipper transcriptional factor ATF-like 2 (Batf2) from Mus musculus (Mouse).